Consider the following 492-residue polypeptide: AAA-ATPase At3g28520 (492 aa).

The chain crosses the membrane as a helical span at residues 7-25; that stretch reads IWGFTSTTMASIMFLWPMY. 249-256 is a binding site for ATP; sequence GPPGTGKS. 2 disordered regions span residues 313-334 and 462-492; these read KKKKEEDEDKEEKKEAENLKRV and KIEKEARKNKKKAEDNVKQEKQNKVKGMVTK. Composition is skewed to basic and acidic residues over residues 323 to 332 and 462 to 484; these read EEKKEAENLK and KIEKEARKNKKKAEDNVKQEKQN.

The protein belongs to the AAA ATPase family. BCS1 subfamily. Mg(2+) is required as a cofactor.

It localises to the membrane. The catalysed reaction is ATP + H2O = ADP + phosphate + H(+). This chain is AAA-ATPase At3g28520, found in Arabidopsis thaliana (Mouse-ear cress).